We begin with the raw amino-acid sequence, 607 residues long: Rap1 GTPase-GDP dissociation stimulator 1-A (607 aa).

ARM repeat units follow at residues 79–118 (ELMR…NICY), 170–211 (DSLQ…NLAE), 347–390 (DGNC…NLAI), 391–431 (PVVN…MLID), and 479–519 (SKDV…LIAA).

Interacts with ralB. Probably interacts with the post-translationally isoprenylated (geranyl-geranylation) forms of ral proteins. Interacts with both GDP-bound and GTP-bound forms of ralA, but interaction is much stronger with ralA-GDP. As to expression, weakly expressed in adult tissues with highest levels found in spleen, kidney, skin and A6 cells.

It is found in the cytoplasm. The protein resides in the cytosol. The protein localises to the endoplasmic reticulum. Its subcellular location is the mitochondrion. Its function is as follows. Stimulates GDP/GTP exchange reaction of a group of small GTP-binding proteins (G proteins) including Rap1a/Rap1b, RhoA, RhoB and KRas, by stimulating the dissociation of GDP from and the subsequent binding of GTP to each small G protein. The polypeptide is Rap1 GTPase-GDP dissociation stimulator 1-A (rap1gds1-a) (Xenopus laevis (African clawed frog)).